The primary structure comprises 110 residues: uncharacterized protein (110 aa).

The protein belongs to the HesB/IscA family.

This is an uncharacterized protein from Rickettsia prowazekii (strain Madrid E).